The primary structure comprises 664 residues: Semaphorin-7A (664 aa).

The first 44 residues, 1–44 (MTPPPPGRAAPSAPRARVLSLPARFGLPLRLRLLLVFWVAAASA), serve as a signal peptide directing secretion. Residues 53–488 (RISAVWKGQD…SQWEVSQVPL (436 aa)) form the Sema domain. N-linked (GlcNAc...) asparagine glycosylation is present at N102. An intrachain disulfide couples C117 to C123. R132 is subject to Asymmetric dimethylarginine. C140 and C149 are oxidised to a cystine. Residues N154 and N256 are each glycosylated (N-linked (GlcNAc...) asparagine). 7 disulfides stabilise this stretch: C264/C364, C289/C333, C491/C509, C498/C539, C501/C516, C564/C611, and C585/C594. The interval 265–267 (RGD) is interaction with integrins. The Cell attachment site motif lies at 265–267 (RGD). Residue N328 is glycosylated (N-linked (GlcNAc...) asparagine). An Ig-like C2-type domain is found at 542-627 (PKPDEAPLQK…YLREAQHWEL (86 aa)). N600 carries N-linked (GlcNAc...) asparagine glycosylation. A646 is lipidated: GPI-anchor amidated alanine. A propeptide spans 647–664 (ASFWLGVLPTLILGLLVH) (removed in mature form).

It belongs to the semaphorin family. In terms of assembly, interacts with PLXNC1. Interacts with ITGA1 and ITGB1. As to expression, highly expressed in activated T-cells (at protein level). Highest expression in brain. Lower in heart, thymus, spleen, testis and ovary. The expression increases in late embryonic and postnatal stages. Detected in T-cells.

Its subcellular location is the cell membrane. Functionally, plays an important role in integrin-mediated signaling and functions both in regulating cell migration and immune responses. Promotes formation of focal adhesion complexes, activation of the protein kinase PTK2/FAK1 and subsequent phosphorylation of MAPK1 and MAPK3. Promotes production of pro-inflammatory cytokines by monocytes and macrophages. Plays an important role in modulating inflammation and T-cell-mediated immune responses. Promotes axon growth in the embryonic olfactory bulb. Promotes attachment, spreading and dendrite outgrowth in melanocytes. This chain is Semaphorin-7A (Sema7a), found in Mus musculus (Mouse).